A 174-amino-acid polypeptide reads, in one-letter code: Crossover junction endodeoxyribonuclease RuvC (174 aa).

Active-site residues include D8, E67, and D139. D8, E67, and D139 together coordinate Mg(2+).

This sequence belongs to the RuvC family. As to quaternary structure, homodimer which binds Holliday junction (HJ) DNA. The HJ becomes 2-fold symmetrical on binding to RuvC with unstacked arms; it has a different conformation from HJ DNA in complex with RuvA. In the full resolvosome a probable DNA-RuvA(4)-RuvB(12)-RuvC(2) complex forms which resolves the HJ. Requires Mg(2+) as cofactor.

It is found in the cytoplasm. The catalysed reaction is Endonucleolytic cleavage at a junction such as a reciprocal single-stranded crossover between two homologous DNA duplexes (Holliday junction).. The RuvA-RuvB-RuvC complex processes Holliday junction (HJ) DNA during genetic recombination and DNA repair. Endonuclease that resolves HJ intermediates. Cleaves cruciform DNA by making single-stranded nicks across the HJ at symmetrical positions within the homologous arms, yielding a 5'-phosphate and a 3'-hydroxyl group; requires a central core of homology in the junction. The consensus cleavage sequence is 5'-(A/T)TT(C/G)-3'. Cleavage occurs on the 3'-side of the TT dinucleotide at the point of strand exchange. HJ branch migration catalyzed by RuvA-RuvB allows RuvC to scan DNA until it finds its consensus sequence, where it cleaves and resolves the cruciform DNA. This is Crossover junction endodeoxyribonuclease RuvC from Pseudomonas paraeruginosa (strain DSM 24068 / PA7) (Pseudomonas aeruginosa (strain PA7)).